Here is a 271-residue protein sequence, read N- to C-terminus: Type III pantothenate kinase (271 aa).

6–13 (DVRNTNIV) lines the ATP pocket. Position 109 to 112 (109 to 112 (GADR)) interacts with substrate. The active-site Proton acceptor is D111. D131 serves as a coordination point for K(+). Position 134 (T134) interacts with ATP. T186 is a substrate binding site.

This sequence belongs to the type III pantothenate kinase family. In terms of assembly, homodimer. The cofactor is NH4(+). K(+) is required as a cofactor.

The protein localises to the cytoplasm. It carries out the reaction (R)-pantothenate + ATP = (R)-4'-phosphopantothenate + ADP + H(+). Its pathway is cofactor biosynthesis; coenzyme A biosynthesis; CoA from (R)-pantothenate: step 1/5. Functionally, catalyzes the phosphorylation of pantothenate (Pan), the first step in CoA biosynthesis. The sequence is that of Type III pantothenate kinase from Rhodococcus opacus (strain B4).